A 350-amino-acid polypeptide reads, in one-letter code: UDP-N-acetylglucosamine--N-acetylmuramyl-(pentapeptide) pyrophosphoryl-undecaprenol N-acetylglucosamine transferase (350 aa).

UDP-N-acetyl-alpha-D-glucosamine contacts are provided by residues 9-11, asparagine 123, arginine 159, serine 181, and glutamine 281; that span reads TGG.

This sequence belongs to the glycosyltransferase 28 family. MurG subfamily.

It is found in the cell inner membrane. The enzyme catalyses di-trans,octa-cis-undecaprenyl diphospho-N-acetyl-alpha-D-muramoyl-L-alanyl-D-glutamyl-meso-2,6-diaminopimeloyl-D-alanyl-D-alanine + UDP-N-acetyl-alpha-D-glucosamine = di-trans,octa-cis-undecaprenyl diphospho-[N-acetyl-alpha-D-glucosaminyl-(1-&gt;4)]-N-acetyl-alpha-D-muramoyl-L-alanyl-D-glutamyl-meso-2,6-diaminopimeloyl-D-alanyl-D-alanine + UDP + H(+). It participates in cell wall biogenesis; peptidoglycan biosynthesis. Functionally, cell wall formation. Catalyzes the transfer of a GlcNAc subunit on undecaprenyl-pyrophosphoryl-MurNAc-pentapeptide (lipid intermediate I) to form undecaprenyl-pyrophosphoryl-MurNAc-(pentapeptide)GlcNAc (lipid intermediate II). This Helicobacter hepaticus (strain ATCC 51449 / 3B1) protein is UDP-N-acetylglucosamine--N-acetylmuramyl-(pentapeptide) pyrophosphoryl-undecaprenol N-acetylglucosamine transferase.